Reading from the N-terminus, the 221-residue chain is Large ribosomal subunit protein uL1 (221 aa).

Belongs to the universal ribosomal protein uL1 family. As to quaternary structure, part of the 50S ribosomal subunit.

Probably involved in E site tRNA release. Binds directly to 23S rRNA. Its function is as follows. Protein L1 is also a translational repressor protein, it controls the translation of its operon by binding to its mRNA. The sequence is that of Large ribosomal subunit protein uL1 from Sulfolobus acidocaldarius (strain ATCC 33909 / DSM 639 / JCM 8929 / NBRC 15157 / NCIMB 11770).